The chain runs to 415 residues: Putative competence-damage inducible protein (415 aa).

It belongs to the CinA family.

The chain is Putative competence-damage inducible protein from Listeria innocua serovar 6a (strain ATCC BAA-680 / CLIP 11262).